Reading from the N-terminus, the 244-residue chain is Ubiquinone/menaquinone biosynthesis C-methyltransferase UbiE (244 aa).

Residues T70, D91, and 117–118 (DA) contribute to the S-adenosyl-L-methionine site.

It belongs to the class I-like SAM-binding methyltransferase superfamily. MenG/UbiE family.

The enzyme catalyses a 2-demethylmenaquinol + S-adenosyl-L-methionine = a menaquinol + S-adenosyl-L-homocysteine + H(+). It carries out the reaction a 2-methoxy-6-(all-trans-polyprenyl)benzene-1,4-diol + S-adenosyl-L-methionine = a 5-methoxy-2-methyl-3-(all-trans-polyprenyl)benzene-1,4-diol + S-adenosyl-L-homocysteine + H(+). Its pathway is quinol/quinone metabolism; menaquinone biosynthesis; menaquinol from 1,4-dihydroxy-2-naphthoate: step 2/2. It functions in the pathway cofactor biosynthesis; ubiquinone biosynthesis. In terms of biological role, methyltransferase required for the conversion of demethylmenaquinol (DMKH2) to menaquinol (MKH2) and the conversion of 2-polyprenyl-6-methoxy-1,4-benzoquinol (DDMQH2) to 2-polyprenyl-3-methyl-6-methoxy-1,4-benzoquinol (DMQH2). In Laribacter hongkongensis (strain HLHK9), this protein is Ubiquinone/menaquinone biosynthesis C-methyltransferase UbiE.